Reading from the N-terminus, the 426-residue chain is Histone-binding protein RBBP7 (426 aa).

N-acetylalanine is present on alanine 2. A Phosphoserine modification is found at serine 3. Lysine 4 is subject to N6-acetyllysine; alternate. A Glycyl lysine isopeptide (Lys-Gly) (interchain with G-Cter in SUMO2); alternate cross-link involves residue lysine 4. A Glycyl lysine isopeptide (Lys-Gly) (interchain with G-Cter in ubiquitin); alternate cross-link involves residue lysine 4. Threonine 10 is subject to Phosphothreonine. WD repeat units follow at residues 47–122 (QWLP…KINH), 128–173 (RARY…LRLR), 181–217 (GLSW…KIVD), 228–269 (VVED…HLVD), 275–312 (VNCL…LHTF), 318–370 (EIFQ…LFIH), and 377–404 (ISDF…IWQM). The residue at position 95 (serine 95) is a Phosphoserine. Residue lysine 101 forms a Glycyl lysine isopeptide (Lys-Gly) (interchain with G-Cter in SUMO2) linkage. Lysine 119 is modified (N6-acetyllysine). Lysine 155 is covalently cross-linked (Glycyl lysine isopeptide (Lys-Gly) (interchain with G-Cter in SUMO2)). The residue at position 159 (lysine 159) is an N6-acetyllysine; alternate. Lysine 159 participates in a covalent cross-link: Glycyl lysine isopeptide (Lys-Gly) (interchain with G-Cter in SUMO2); alternate. Phosphoserine is present on serine 355.

It belongs to the WD repeat RBAP46/RBAP48/MSI1 family. As to quaternary structure, binds directly to helix 1 of the histone fold of histone H4, a region that is not accessible when H4 is in chromatin. Subunit of the type B histone acetyltransferase (HAT) complex, composed of RBBP7 and HAT1. Subunit of the core histone deacetylase (HDAC) complex, which is composed of HDAC1, HDAC2, RBBP4 and RBBP7. The core HDAC complex associates with SIN3A, ARID4B/SAP180, SAP18, SAP30, SAP130, SUDS3/SAP45 and possibly ARID4A/RBP1 and ING1 to form the SIN3 HDAC complex. Component of the nucleosome remodeling and deacetylase (NuRD) repressor complex, composed of core proteins MTA1, MTA2, MTA3, RBBP4, RBBP7, HDAC1, HDAC2, MBD2, MBD3, and peripherally associated proteins CDK2AP1, CDK2AP2, GATAD2A, GATAD2B, CHD3, CHD4 and CHD5. The exact stoichiometry of the NuRD complex is unknown, and some subunits such as MBD2 and MBD3, GATAD2A and GATAD2B, and CHD3, CHD4 and CHD5 define mutually exclusive NuRD complexes. The NuRD complex may interact with MBD3L1. The NuRD complex may interact with MBD3L2. Subunit of the PRC2/EED-EZH2 complex, which is composed of at least EED, EZH2, RBBP4, RBBP7 and SUZ12. The PRC2/EED-EZH2 complex may also associate with HDAC1. Component of the NURF-1 ISWI chromatin remodeling complex (also called the nucleosome-remodeling factor (NURF) complex) at least composed of SMARCA1, BPTF, RBBP4 and RBBP7. Within the complex interacts with SMARCA1. Component of the BPFT-SMARCA1 complex at least composed of SMARCA1, BPFT, RBBP4 and RBBP7; the complex is catalytically inactive and does not remodel chromatin. Within the complex interacts with SMARCA1. Interacts with BRCA1. Interacts with CDK2AP1. Interacts with CENPA. Interacts with CHD3. Interacts with CHD4. Interacts with CREBBP, and this interaction may be enhanced by the binding of phosphorylated CREB1 to CREBBP. Interacts with HDAC7. Interacts with MTA1. Interacts with PWWP2B. Interacts with RB1 (via viral protein-binding domain). Interacts with SUV39H1.

The protein resides in the nucleus. Its function is as follows. Core histone-binding subunit that may target chromatin remodeling factors, histone acetyltransferases and histone deacetylases to their histone substrates in a manner that is regulated by nucleosomal DNA. Component of several complexes which regulate chromatin metabolism. These include the type B histone acetyltransferase (HAT) complex, which is required for chromatin assembly following DNA replication; the core histone deacetylase (HDAC) complex, which promotes histone deacetylation and consequent transcriptional repression; the nucleosome remodeling and histone deacetylase complex (the NuRD complex), which promotes transcriptional repression by histone deacetylation and nucleosome remodeling; and the PRC2/EED-EZH2 complex, which promotes repression of homeotic genes during development; and the NURF (nucleosome remodeling factor) complex. The chain is Histone-binding protein RBBP7 (RBBP7) from Pongo abelii (Sumatran orangutan).